The following is a 508-amino-acid chain: Photosystem II CP47 reaction center protein (508 aa).

6 helical membrane passes run 21–36 (SVHL…WAGS), 101–115 (IVLS…IWHW), 140–156 (GIHL…FGAF), 203–218 (IAAG…FHLT), 237–252 (VLSS…AFVV), and 457–472 (CFAL…HGAR).

This sequence belongs to the PsbB/PsbC family. PsbB subfamily. As to quaternary structure, PSII is composed of 1 copy each of membrane proteins PsbA, PsbB, PsbC, PsbD, PsbE, PsbF, PsbH, PsbI, PsbJ, PsbK, PsbL, PsbM, PsbT, PsbX, PsbY, PsbZ, Psb30/Ycf12, at least 3 peripheral proteins of the oxygen-evolving complex and a large number of cofactors. It forms dimeric complexes. Binds multiple chlorophylls. PSII binds additional chlorophylls, carotenoids and specific lipids. serves as cofactor.

The protein localises to the plastid. It is found in the chloroplast thylakoid membrane. One of the components of the core complex of photosystem II (PSII). It binds chlorophyll and helps catalyze the primary light-induced photochemical processes of PSII. PSII is a light-driven water:plastoquinone oxidoreductase, using light energy to abstract electrons from H(2)O, generating O(2) and a proton gradient subsequently used for ATP formation. The protein is Photosystem II CP47 reaction center protein of Chlorokybus atmophyticus (Soil alga).